The following is a 315-amino-acid chain: ATP synthase gamma chain (315 aa).

Belongs to the ATPase gamma chain family. F-type ATPases have 2 components, CF(1) - the catalytic core - and CF(0) - the membrane proton channel. CF(1) has five subunits: alpha(3), beta(3), gamma(1), delta(1), epsilon(1). CF(0) has three main subunits: a, b and c.

The protein localises to the cellular thylakoid membrane. Its function is as follows. Produces ATP from ADP in the presence of a proton gradient across the membrane. The gamma chain is believed to be important in regulating ATPase activity and the flow of protons through the CF(0) complex. This is ATP synthase gamma chain from Nostoc punctiforme (strain ATCC 29133 / PCC 73102).